The primary structure comprises 453 residues: Alpha-2B adrenergic receptor (453 aa).

At 1–17 (MSGPTMDHQEPYSVQAT) the chain is on the extracellular side. The chain crosses the membrane as a helical span at residues 18 to 42 (AAIASAITFLILFTIFGNALVILAV). Residues 43–54 (LTSRSLRAPQNL) lie on the Cytoplasmic side of the membrane. Residues 55–80 (FLVSLAAADILVATLIIPFSLANELL) traverse the membrane as a helical segment. At 81-90 (GYWYFWRAWC) the chain is on the extracellular side. Cysteines 90 and 169 form a disulfide. A helical membrane pass occupies residues 91 to 113 (EVYLALDVLFCTSSIVHLCAISL). Over 114–135 (DRYWAVSRALEYNSKRTPRRIK) the chain is Cytoplasmic. The chain crosses the membrane as a helical span at residues 136-158 (CIILTVWLIAAVISLPPLIYKGD). Topologically, residues 159–174 (QRPEPRGLPQCELNQE) are extracellular. Residues 175–198 (AWYILASSIGSFFAPCLIMILVYL) traverse the membrane as a helical segment. Topologically, residues 199–375 (RIYVIAKRSH…LSREKRFTFV (177 aa)) are cytoplasmic. Residues 213 to 331 (GAKRGSGEGE…PASVCNPPLQ (119 aa)) are disordered. Polar residues predominate over residues 287–297 (GQGQKKGTSGA). The span at 300–314 (EEGDEEDEEEVEECE) shows a compositional bias: acidic residues. The helical transmembrane segment at 376–399 (LAVVIGVFVVCWFPFFFSYSLGAI) threads the bilayer. Residues 400-408 (CPQHCKVPH) lie on the Extracellular side of the membrane. The chain crosses the membrane as a helical span at residues 409–432 (GLFQFFFWIGYCNSSLNPVIYTVF). Over 433 to 453 (NQDFRRAFRRILCRPWTQTGW) the chain is Cytoplasmic. Cysteine 445 is lipidated: S-palmitoyl cysteine.

It belongs to the G-protein coupled receptor 1 family. Adrenergic receptor subfamily. ADRA2B sub-subfamily. As to quaternary structure, interacts with RAB26. Interacts with PPP1R9B. Interacts with GGA1, GGA2 and GGA3.

The protein localises to the cell membrane. Functionally, alpha-2 adrenergic receptors mediate the catecholamine-induced inhibition of adenylate cyclase through the action of G proteins. The protein is Alpha-2B adrenergic receptor (Adra2b) of Rattus norvegicus (Rat).